The chain runs to 335 residues: Holliday junction branch migration complex subunit RuvB (335 aa).

Positions 4-184 are large ATPase domain (RuvB-L); it reads ADRLIDATEK…FGIVQRLEFY (181 aa). ATP is bound by residues Ile-23, Arg-24, Gly-65, Lys-68, Thr-69, Thr-70, 131-133, Arg-174, Tyr-184, and Arg-221; that span reads EDY. Position 69 (Thr-69) interacts with Mg(2+). Residues 185 to 255 form a small ATPAse domain (RuvB-S) region; sequence SVEDLSYIVG…VAELALNMID (71 aa). Positions 258–335 are head domain (RuvB-H); the sequence is KSGFDYMDRK…HHFGLLPKQD (78 aa). 2 residues coordinate DNA: Arg-313 and Arg-318.

It belongs to the RuvB family. As to quaternary structure, homohexamer. Forms an RuvA(8)-RuvB(12)-Holliday junction (HJ) complex. HJ DNA is sandwiched between 2 RuvA tetramers; dsDNA enters through RuvA and exits via RuvB. An RuvB hexamer assembles on each DNA strand where it exits the tetramer. Each RuvB hexamer is contacted by two RuvA subunits (via domain III) on 2 adjacent RuvB subunits; this complex drives branch migration. In the full resolvosome a probable DNA-RuvA(4)-RuvB(12)-RuvC(2) complex forms which resolves the HJ.

It localises to the cytoplasm. The enzyme catalyses ATP + H2O = ADP + phosphate + H(+). In terms of biological role, the RuvA-RuvB-RuvC complex processes Holliday junction (HJ) DNA during genetic recombination and DNA repair, while the RuvA-RuvB complex plays an important role in the rescue of blocked DNA replication forks via replication fork reversal (RFR). RuvA specifically binds to HJ cruciform DNA, conferring on it an open structure. The RuvB hexamer acts as an ATP-dependent pump, pulling dsDNA into and through the RuvAB complex. RuvB forms 2 homohexamers on either side of HJ DNA bound by 1 or 2 RuvA tetramers; 4 subunits per hexamer contact DNA at a time. Coordinated motions by a converter formed by DNA-disengaged RuvB subunits stimulates ATP hydrolysis and nucleotide exchange. Immobilization of the converter enables RuvB to convert the ATP-contained energy into a lever motion, pulling 2 nucleotides of DNA out of the RuvA tetramer per ATP hydrolyzed, thus driving DNA branch migration. The RuvB motors rotate together with the DNA substrate, which together with the progressing nucleotide cycle form the mechanistic basis for DNA recombination by continuous HJ branch migration. Branch migration allows RuvC to scan DNA until it finds its consensus sequence, where it cleaves and resolves cruciform DNA. The polypeptide is Holliday junction branch migration complex subunit RuvB (Pseudoalteromonas translucida (strain TAC 125)).